Here is a 415-residue protein sequence, read N- to C-terminus: Phosphoglycerate kinase (415 aa).

Positions 22, 23, 24, 25, 37, 38, 61, 62, 64, 65, 121, 168, and 169 each coordinate (2R)-3-phosphoglycerate. Glycine 212 serves as a coordination point for ADP. Glycine 212 contacts CDP. AMP is bound by residues alanine 213 and lysine 214. Residue alanine 213 coordinates ATP. Residue alanine 213 coordinates Mg(2+). 2 residues coordinate Mg(2+): alanine 216 and aspartate 217. Aspartate 217 serves as a coordination point for CDP. An AMP-binding site is contributed by lysine 218. Lysine 218 contributes to the ATP binding site. Glycine 236 provides a ligand contact to ADP. Glycine 236 contacts CDP. Glycine 237 and glycine 311 together coordinate AMP. Glycine 237 and glycine 311 together coordinate ATP. The CDP site is built by glycine 336 and phenylalanine 341. An ADP-binding site is contributed by phenylalanine 341. AMP is bound at residue glutamate 342. ATP contacts are provided by glutamate 342, aspartate 373, and threonine 374. Aspartate 373 contributes to the Mg(2+) binding site.

The protein belongs to the phosphoglycerate kinase family. In terms of assembly, monomer. Requires Mg(2+) as cofactor.

It localises to the cytoplasm. The enzyme catalyses (2R)-3-phosphoglycerate + ATP = (2R)-3-phospho-glyceroyl phosphate + ADP. It functions in the pathway carbohydrate degradation; glycolysis; pyruvate from D-glyceraldehyde 3-phosphate: step 2/5. Enzyme of the glycolytic pathway. Glycolysis is essential in glial cells but not in neurons; neurons rely on the citric acid cycle for their energy needs, and on lactate and alanine secreted into the hemolymph by glial cells to fuel it. The sequence is that of Phosphoglycerate kinase from Drosophila melanogaster (Fruit fly).